The chain runs to 862 residues: Alanine--tRNA ligase (862 aa).

4 residues coordinate Zn(2+): H552, H556, C653, and H657.

The protein belongs to the class-II aminoacyl-tRNA synthetase family. It depends on Zn(2+) as a cofactor.

The protein localises to the cytoplasm. It catalyses the reaction tRNA(Ala) + L-alanine + ATP = L-alanyl-tRNA(Ala) + AMP + diphosphate. Catalyzes the attachment of alanine to tRNA(Ala) in a two-step reaction: alanine is first activated by ATP to form Ala-AMP and then transferred to the acceptor end of tRNA(Ala). Also edits incorrectly charged Ser-tRNA(Ala) and Gly-tRNA(Ala) via its editing domain. The sequence is that of Alanine--tRNA ligase from Nitrosospira multiformis (strain ATCC 25196 / NCIMB 11849 / C 71).